A 403-amino-acid chain; its full sequence is Acetate kinase (403 aa).

Asn13 is a Mg(2+) binding site. Lys20 provides a ligand contact to ATP. Arg94 serves as a coordination point for substrate. Catalysis depends on Asp153, which acts as the Proton donor/acceptor. ATP is bound by residues His213–Gly217, Asp288–Arg290, and Gly336–Asn340. Mg(2+) is bound at residue Glu390.

Belongs to the acetokinase family. In terms of assembly, homodimer. The cofactor is Mg(2+). Requires Mn(2+) as cofactor.

It is found in the cytoplasm. It carries out the reaction acetate + ATP = acetyl phosphate + ADP. The protein operates within metabolic intermediate biosynthesis; acetyl-CoA biosynthesis; acetyl-CoA from acetate: step 1/2. Catalyzes the formation of acetyl phosphate from acetate and ATP. Can also catalyze the reverse reaction. In Buchnera aphidicola subsp. Schizaphis graminum (strain Sg), this protein is Acetate kinase.